The sequence spans 214 residues: Oxaloacetate tautomerase fahd-1, mitochondrial (214 aa).

Mg(2+) contacts are provided by Glu-65, Glu-67, and Asp-96.

The protein belongs to the FAH family. Requires Mg(2+) as cofactor. Mn(2+) is required as a cofactor. In terms of tissue distribution, widely expressed.

The protein resides in the mitochondrion. It catalyses the reaction oxaloacetate = enol-oxaloacetate. Its function is as follows. Tautomerase that converts enol-oxaloacetate, a strong inhibitor of succinate dehydrogenase, to the physiological keto form of oxaloacetate. This is Oxaloacetate tautomerase fahd-1, mitochondrial from Caenorhabditis elegans.